The primary structure comprises 461 residues: MPKMFGTDGVRGLANRDLTARLALDLGDAAVRVLGDAGTQDDQPEGRRRALVGRDTRVSGDFLASALSAGMAAGGFDVIDAGIIPTPGIAFLTSVLNVEMGAVISASHNPMPDNGIKFFARGGFKLPDQKEDDIEAVLGQDWDRPTGAGVGRVSHDQTTATNLYIDHLVATIAPLNDDKTQPKPLKGLKIVADCANGATSVVAPEALRRAGADVIVINASPDGYNINKNAGSTHPEQLQAMVKATDAVMGVAFDGDADRCLAVDEDGNMINGDQIMGILARAKQREGKLNHDTLVVTVMSNLGLKLALKDMGIKTVETAVGDRYVLEEMLKGDYSLGGEQSGHVINREFATTGDGTLTALTLCNEVVKSGKSLKELAADFPQLPQTLINVPNVDKKAASTNKRIQDAVAREEELLGDTGRVLLRPSGTEPLVRVMAEAATQAYADEVCTRLAKIVAEELAL.

Serine 107 functions as the Phosphoserine intermediate in the catalytic mechanism. Residues serine 107, aspartate 254, aspartate 256, and aspartate 258 each contribute to the Mg(2+) site. Serine 107 is subject to Phosphoserine.

Belongs to the phosphohexose mutase family. Mg(2+) serves as cofactor. In terms of processing, activated by phosphorylation.

It catalyses the reaction alpha-D-glucosamine 1-phosphate = D-glucosamine 6-phosphate. Functionally, catalyzes the conversion of glucosamine-6-phosphate to glucosamine-1-phosphate. This Bifidobacterium longum (strain DJO10A) protein is Phosphoglucosamine mutase.